Consider the following 300-residue polypeptide: NAD kinase (300 aa).

Catalysis depends on Asp-75, which acts as the Proton acceptor. Residues 75–76 (DG), 149–150 (ND), Arg-177, Asp-179, 190–195 (TAYALS), Ala-214, and Gln-248 contribute to the NAD(+) site.

This sequence belongs to the NAD kinase family. It depends on a divalent metal cation as a cofactor.

It localises to the cytoplasm. The enzyme catalyses NAD(+) + ATP = ADP + NADP(+) + H(+). In terms of biological role, involved in the regulation of the intracellular balance of NAD and NADP, and is a key enzyme in the biosynthesis of NADP. Catalyzes specifically the phosphorylation on 2'-hydroxyl of the adenosine moiety of NAD to yield NADP. The polypeptide is NAD kinase (Burkholderia pseudomallei (strain K96243)).